We begin with the raw amino-acid sequence, 323 residues long: Pseudouridine-5'-phosphate glycosidase (323 aa).

Glu43 acts as the Proton donor in catalysis. Residues Lys104 and Val124 each contribute to the substrate site. Asp156 serves as a coordination point for Mn(2+). 158-160 (SAD) is a substrate binding site. The active-site Nucleophile is the Lys177.

This sequence belongs to the pseudouridine-5'-phosphate glycosidase family. In terms of assembly, homotrimer. Mn(2+) serves as cofactor.

It carries out the reaction D-ribose 5-phosphate + uracil = psi-UMP + H2O. Functionally, catalyzes the reversible cleavage of pseudouridine 5'-phosphate (PsiMP) to ribose 5-phosphate and uracil. Functions biologically in the cleavage direction, as part of a pseudouridine degradation pathway. This chain is Pseudouridine-5'-phosphate glycosidase, found in Streptomyces griseus subsp. griseus (strain JCM 4626 / CBS 651.72 / NBRC 13350 / KCC S-0626 / ISP 5235).